Here is a 430-residue protein sequence, read N- to C-terminus: Serine--tRNA ligase (430 aa).

Residue 237-239 (TAE) participates in L-serine binding. 268-270 (RSE) provides a ligand contact to ATP. Glutamate 291 serves as a coordination point for L-serine. 355 to 358 (EISS) is an ATP binding site. Serine 391 serves as a coordination point for L-serine.

Belongs to the class-II aminoacyl-tRNA synthetase family. Type-1 seryl-tRNA synthetase subfamily. In terms of assembly, homodimer. The tRNA molecule binds across the dimer.

The protein localises to the cytoplasm. The enzyme catalyses tRNA(Ser) + L-serine + ATP = L-seryl-tRNA(Ser) + AMP + diphosphate + H(+). The catalysed reaction is tRNA(Sec) + L-serine + ATP = L-seryl-tRNA(Sec) + AMP + diphosphate + H(+). Its pathway is aminoacyl-tRNA biosynthesis; selenocysteinyl-tRNA(Sec) biosynthesis; L-seryl-tRNA(Sec) from L-serine and tRNA(Sec): step 1/1. Functionally, catalyzes the attachment of serine to tRNA(Ser). Is also able to aminoacylate tRNA(Sec) with serine, to form the misacylated tRNA L-seryl-tRNA(Sec), which will be further converted into selenocysteinyl-tRNA(Sec). In Shigella boydii serotype 18 (strain CDC 3083-94 / BS512), this protein is Serine--tRNA ligase.